A 129-amino-acid polypeptide reads, in one-letter code: Basic blue protein (129 aa).

Positions 1-33 (MAKGRGSASWSARAIVTLMAVSVLLLQADYVQA) are cleaved as a signal peptide. Residues 34–129 (ATYTVGDSGI…SDMKIAVTAV (96 aa)) form the Phytocyanin domain. Cu cation contacts are provided by His-72, Cys-112, His-117, and Met-122. Cys-85 and Cys-118 are oxidised to a cystine.

In terms of tissue distribution, expressed in the inflorescence and in the transmitting tract of the pistil. Detected in roots, stems, cauline leaves, cotyledons, hypocotyls, guard cells, pistils, sepals, stamen filaments and vascular bundles of roots but not of leaves. Not expressed in petals, anthers or pollen.

Its subcellular location is the secreted. It localises to the extracellular space. The protein resides in the extracellular matrix. In terms of biological role, forms a concentration gradient along the pollen tube growth path, with a lower level in the stigma papilla cell wall and a higher level in the transmitting tract extracellular matix of the style. This chain is Basic blue protein (ARPN), found in Arabidopsis thaliana (Mouse-ear cress).